Consider the following 425-residue polypeptide: Cysteate synthase (425 aa).

The residue at position 106 (Lys-106) is an N6-(pyridoxal phosphate)lysine. Residues Asn-132 and Thr-382 each contribute to the pyridoxal 5'-phosphate site.

This sequence belongs to the threonine synthase family. Cysteate synthase subfamily. As to quaternary structure, homotrimer. Pyridoxal 5'-phosphate is required as a cofactor.

The catalysed reaction is O-phospho-L-serine + sulfite + H(+) = L-cysteate + phosphate. It participates in cofactor biosynthesis; coenzyme M biosynthesis. Functionally, specifically catalyzes the beta-elimination of phosphate from L-phosphoserine and the beta-addition of sulfite to the dehydroalanine intermediate to produce L-cysteate. The polypeptide is Cysteate synthase (Methanosphaerula palustris (strain ATCC BAA-1556 / DSM 19958 / E1-9c)).